The following is a 1000-amino-acid chain: MMDLSSKDALSDVLKDTHAQSSDPSLWAIFGHQSSDNVHEGGNESVSVEQEIFDLSQLSERPVSETVSKASIPTNINGLSQVKPSALEKSQEVLSLQKLPIKGRRPAGRRGRPALNTSNSLERNGTRYVSAEAPISVKSSIPAIPRVTFERLCYESAIASNLPPNALSPLEAEMLSEILENPTWLSLYLSIRNGICYLWHRNPTLYVSFNEALGIVREKKAFPLASLAFEFLSRNGHINYGCIYIISSLKLDESLSQKTVAIIGAGMAGISCARQLTNLFAQYEQDFLSRGEKPPRIVIYEASERLGGHIYTHMVPLSDNEVSEKSSLATTVNATNECMVNLLTDSLIGMPTLDSDPLYIISSQQLSLDAVHTRNREFILHDIENGRIDTEHVQRIFRLFDALLFYFNASASKQPLHSLITPPEQEFIQKLDQIGWYISIEAFPLQIKDTLSEFLGNSANTLTSLLHLTVLDLKIFEWFKEYLSQSLSVSLENVYPGSIPNLNLLLGENVASYSFKHGMADMLNSLASTPSPLPILFDQCVHTVKLEDNTVNLSFVNETTVSVDKVVICIPMDKLNTHLITFEPPLEEKKLKAIDRCHFTNVKKVILIFKTQFWEPNISIFGSLPQDSGRNFIFNDCTRFYEHPTLSVFVKVEGIDFMKDDDIVNGIVSQLKKVYKPKSEAINPIRTIISNWENNSYTNHSSYQISNLFLEEDYAILSEPIDNTVFFASEAISQKNSGSIRGAFDSGILAARDVLASLIGNVVLPNTLVIEENLEQPRKTYGTKRNAQQALGKEGERENKEKRISYHTEYLRLRQKRLDKEQQECDLLIAELLGPSPVPPSRPSANPYLLYQKTQWHVCKTLADQDKQRVTGDPEARATKNEIRAKLGKTWRALDSLGKQPWVDEINARRANYSTRLEEYQRQINSYNVRVAQIKSEHQRRCESQPIPEDEAKLKLLAEQEDEHLHPEKEGMSVENSDDDYHDDLDYEDSISEVFPDNFS.

The disordered stretch occupies residues 104 to 123; the sequence is RRPAGRRGRPALNTSNSLER. Residues 107 to 137 are a coiled coil; the sequence is AGRRGRPALNTSNSLERNGTRYVSAEAPISV. One can recognise an SWIRM domain in the interval 153 to 249; it reads CYESAIASNL…YGCIYIISSL (97 aa). FAD-binding positions include 260 to 302, Glu301, and 328 to 329; these read VAII…IYEA and LA. The interval 279 to 950 is demethylase activity; that stretch reads LFAQYEQDFL…RCESQPIPED (672 aa). The stretch at 434-529 forms a coiled coil; the sequence is IGWYISIEAF…ADMLNSLAST (96 aa). Residues 780-800 form a disordered region; the sequence is TYGTKRNAQQALGKEGERENK. A DNA-binding region (HMG box) is located at residues 841-921; the sequence is SRPSANPYLL…NYSTRLEEYQ (81 aa). Residue 908–909 coordinates FAD; it reads AR. The span at 959-972 shows a compositional bias: basic and acidic residues; sequence EQEDEHLHPEKEGM. The tract at residues 959–1000 is disordered; sequence EQEDEHLHPEKEGMSVENSDDDYHDDLDYEDSISEVFPDNFS. Residues 976–991 are compositionally biased toward acidic residues; the sequence is NSDDDYHDDLDYEDSI.

The protein belongs to the flavin monoamine oxidase family. Component of the SWM histone demethylase complex composed of at least lsd1, lsd2, phf1 and phf2. Interacts directly with lsd2. Requires FAD as cofactor.

It localises to the nucleus. Catalytic component of the SWM histone demethylase complex that specifically demethylates H3K9me2, a specific tag for epigenetic transcriptional activation, thereby acting as a corepressor. Acts by oxidizing the substrate by FAD to generate the corresponding imine that is subsequently hydrolyzed. Has a role in regulating heterochromatin propagation and euchromatic transcription. Also has a gene activating role. The protein is Lysine-specific histone demethylase 1 (lsd1) of Schizosaccharomyces pombe (strain 972 / ATCC 24843) (Fission yeast).